A 384-amino-acid chain; its full sequence is N-acetylneuraminate epimerase (384 aa).

A signal peptide spans 1–29 (MGMQMKNFKKMMTLMALCLSVAITTSGYA). Kelch repeat units lie at residues 51–95 (VIYV…VFLN), 97–149 (KLYV…VKLN), 151–184 (TMVLITGGVNEHIFDKYFIDIAAADESEKNKVIY), 185–230 (NYFN…VMEN), 233–282 (LMLI…LAGA), 304–353 (QNYT…SYGD), and 355–384 (VFLIGGENAKGKPVSSVTSFTMRDGNLLIK). The active-site Proton acceptor is the glutamate 239.

It belongs to the NanM family. As to quaternary structure, homodimer.

The protein localises to the periplasm. The enzyme catalyses N-acetyl-alpha-neuraminate = N-acetyl-beta-neuraminate. Functionally, converts alpha-N-acetylneuranimic acid (Neu5Ac) to the beta-anomer, accelerating the equilibrium between the alpha- and beta-anomers. Probably facilitates sialidase-negative bacteria to compete successfully for limited amounts of extracellular Neu5Ac, which is likely taken up in the beta-anomer. In addition, the rapid removal of sialic acid from solution might be advantageous to the bacterium to damp down host responses. This is N-acetylneuraminate epimerase from Salmonella typhi.